The following is an 87-amino-acid chain: Small ribosomal subunit protein uS19m (87 aa).

This sequence belongs to the universal ribosomal protein uS19 family.

It localises to the mitochondrion. The polypeptide is Small ribosomal subunit protein uS19m (mrps19) (Dictyostelium citrinum (Slime mold)).